Consider the following 142-residue polypeptide: MLNIDEIKKLIPHRYPFLLVDKITELEVGKRAVGIKNVTVNEPFFQGHFPEYPLMPGVLIVEALAQVCGVAMMSVEENKGKLGVFAGIDKVRIKREVRPGDTLTMEVEMTTLRKNIAKADAKAYVGEELVCKGELMFALVEK.

Residue His48 is part of the active site.

It belongs to the thioester dehydratase family. FabZ subfamily.

It localises to the cytoplasm. The enzyme catalyses a (3R)-hydroxyacyl-[ACP] = a (2E)-enoyl-[ACP] + H2O. In terms of biological role, involved in unsaturated fatty acids biosynthesis. Catalyzes the dehydration of short chain beta-hydroxyacyl-ACPs and long chain saturated and unsaturated beta-hydroxyacyl-ACPs. The chain is 3-hydroxyacyl-[acyl-carrier-protein] dehydratase FabZ from Clostridioides difficile (strain 630) (Peptoclostridium difficile).